The chain runs to 159 residues: 6,7-dimethyl-8-ribityllumazine synthase (159 aa).

5-amino-6-(D-ribitylamino)uracil is bound by residues Trp-26, 58–60 (SFE), and 80–82 (VVI). 85 to 86 (GT) contacts (2S)-2-hydroxy-3-oxobutyl phosphate. The Proton donor role is filled by His-88. Position 113 (Phe-113) interacts with 5-amino-6-(D-ribitylamino)uracil. Position 127 (Arg-127) interacts with (2S)-2-hydroxy-3-oxobutyl phosphate.

Belongs to the DMRL synthase family.

It carries out the reaction (2S)-2-hydroxy-3-oxobutyl phosphate + 5-amino-6-(D-ribitylamino)uracil = 6,7-dimethyl-8-(1-D-ribityl)lumazine + phosphate + 2 H2O + H(+). It participates in cofactor biosynthesis; riboflavin biosynthesis; riboflavin from 2-hydroxy-3-oxobutyl phosphate and 5-amino-6-(D-ribitylamino)uracil: step 1/2. Functionally, catalyzes the formation of 6,7-dimethyl-8-ribityllumazine by condensation of 5-amino-6-(D-ribitylamino)uracil with 3,4-dihydroxy-2-butanone 4-phosphate. This is the penultimate step in the biosynthesis of riboflavin. The chain is 6,7-dimethyl-8-ribityllumazine synthase from Renibacterium salmoninarum (strain ATCC 33209 / DSM 20767 / JCM 11484 / NBRC 15589 / NCIMB 2235).